The following is a 290-amino-acid chain: Acetyl-coenzyme A carboxylase carboxyl transferase subunit beta (290 aa).

One can recognise a CoA carboxyltransferase N-terminal domain in the interval Leu-27–Ala-290. Residues Cys-31, Cys-34, Cys-50, and Cys-53 each contribute to the Zn(2+) site. Residues Cys-31–Cys-53 form a C4-type zinc finger.

The protein belongs to the AccD/PCCB family. In terms of assembly, acetyl-CoA carboxylase is a heterohexamer composed of biotin carboxyl carrier protein (AccB), biotin carboxylase (AccC) and two subunits each of ACCase subunit alpha (AccA) and ACCase subunit beta (AccD). Zn(2+) serves as cofactor.

It localises to the cytoplasm. The enzyme catalyses N(6)-carboxybiotinyl-L-lysyl-[protein] + acetyl-CoA = N(6)-biotinyl-L-lysyl-[protein] + malonyl-CoA. It functions in the pathway lipid metabolism; malonyl-CoA biosynthesis; malonyl-CoA from acetyl-CoA: step 1/1. Functionally, component of the acetyl coenzyme A carboxylase (ACC) complex. Biotin carboxylase (BC) catalyzes the carboxylation of biotin on its carrier protein (BCCP) and then the CO(2) group is transferred by the transcarboxylase to acetyl-CoA to form malonyl-CoA. This is Acetyl-coenzyme A carboxylase carboxyl transferase subunit beta from Cupriavidus taiwanensis (strain DSM 17343 / BCRC 17206 / CCUG 44338 / CIP 107171 / LMG 19424 / R1) (Ralstonia taiwanensis (strain LMG 19424)).